We begin with the raw amino-acid sequence, 806 residues long: Glycerol-3-phosphate acyltransferase (806 aa).

Residues 305-310 (CHRSHM) carry the HXXXXD motif motif.

This sequence belongs to the GPAT/DAPAT family.

The protein localises to the cell inner membrane. It carries out the reaction sn-glycerol 3-phosphate + an acyl-CoA = a 1-acyl-sn-glycero-3-phosphate + CoA. It participates in phospholipid metabolism; CDP-diacylglycerol biosynthesis; CDP-diacylglycerol from sn-glycerol 3-phosphate: step 1/3. The sequence is that of Glycerol-3-phosphate acyltransferase from Escherichia fergusonii (strain ATCC 35469 / DSM 13698 / CCUG 18766 / IAM 14443 / JCM 21226 / LMG 7866 / NBRC 102419 / NCTC 12128 / CDC 0568-73).